We begin with the raw amino-acid sequence, 313 residues long: Ribosomal RNA small subunit methyltransferase H (313 aa).

S-adenosyl-L-methionine contacts are provided by residues 34 to 36, aspartate 55, phenylalanine 82, aspartate 103, and glutamine 110; that span reads GGH.

Belongs to the methyltransferase superfamily. RsmH family.

The protein localises to the cytoplasm. It catalyses the reaction cytidine(1402) in 16S rRNA + S-adenosyl-L-methionine = N(4)-methylcytidine(1402) in 16S rRNA + S-adenosyl-L-homocysteine + H(+). Specifically methylates the N4 position of cytidine in position 1402 (C1402) of 16S rRNA. The chain is Ribosomal RNA small subunit methyltransferase H from Pelobacter propionicus (strain DSM 2379 / NBRC 103807 / OttBd1).